Reading from the N-terminus, the 182-residue chain is Ribosome maturation factor RimM (182 aa).

Residues 102-182 (EEGDYYWKDL…SIEVDWDPGF (81 aa)) enclose the PRC barrel domain.

The protein belongs to the RimM family. Binds ribosomal protein uS19.

It is found in the cytoplasm. Its function is as follows. An accessory protein needed during the final step in the assembly of 30S ribosomal subunit, possibly for assembly of the head region. Essential for efficient processing of 16S rRNA. May be needed both before and after RbfA during the maturation of 16S rRNA. It has affinity for free ribosomal 30S subunits but not for 70S ribosomes. This chain is Ribosome maturation factor RimM, found in Escherichia fergusonii (strain ATCC 35469 / DSM 13698 / CCUG 18766 / IAM 14443 / JCM 21226 / LMG 7866 / NBRC 102419 / NCTC 12128 / CDC 0568-73).